We begin with the raw amino-acid sequence, 283 residues long: Rhomboid-like protease 2 (283 aa).

The span at 1-11 shows a compositional bias: polar residues; sequence MANIRTLSDYA. Residues 1–26 form a disordered region; sequence MANIRTLSDYASSPPRGSSALEGEVG. Helical transmembrane passes span 62–82, 114–134, and 149–169; these read IIIISFVQIAVYIASLAAGLA, ICPLFLHLNLFHILMNLWVQI, and LLAVYFGVGVLANMISAAVLF. The Nucleophile role is filled by S178. The next 4 membrane-spanning stretches (helical) occupy residues 179–199, 205–225, 227–247, and 260–280; these read TAVFALIGVQLAELALIWHAI, AIISVCICLFFVFVSSFGSHM, SVGHIGGLVMGFAAGIWLNEN, and LTSQVALAAAPILSCIFIFLV. H230 is a catalytic residue.

This sequence belongs to the peptidase S54 family.

The protein resides in the membrane. The enzyme catalyses Cleaves type-1 transmembrane domains using a catalytic dyad composed of serine and histidine that are contributed by different transmembrane domains.. Serine protease involved in intramembrane proteolysis and the subsequent release of polypeptides from their membrane anchors. This is Rhomboid-like protease 2 (ROM2) from Toxoplasma gondii.